A 128-amino-acid chain; its full sequence is Small ribosomal subunit protein uS8c (128 aa).

This sequence belongs to the universal ribosomal protein uS8 family. Part of the 30S ribosomal subunit.

The protein localises to the plastid. It localises to the chloroplast. Functionally, one of the primary rRNA binding proteins, it binds directly to 16S rRNA central domain where it helps coordinate assembly of the platform of the 30S subunit. The sequence is that of Small ribosomal subunit protein uS8c (rps8) from Gnetum parvifolium (Small-leaved jointfir).